The chain runs to 612 residues: Probable Xaa-Pro aminopeptidase P (612 aa).

Mn(2+) contacts are provided by Asp409, Asp420, Glu518, and Glu532.

The protein belongs to the peptidase M24B family. The cofactor is Mn(2+).

It catalyses the reaction Release of any N-terminal amino acid, including proline, that is linked to proline, even from a dipeptide or tripeptide.. In terms of biological role, catalyzes the removal of a penultimate prolyl residue from the N-termini of peptides. This chain is Probable Xaa-Pro aminopeptidase P (AMPP), found in Verticillium alfalfae (strain VaMs.102 / ATCC MYA-4576 / FGSC 10136) (Verticillium wilt of alfalfa).